Consider the following 261-residue polypeptide: Global transcriptional regulator CodY (261 aa).

Residues 1-159 (MANLLDKTRK…ASTVVGLQLL (159 aa)) form a GAF domain region. The H-T-H motif DNA-binding region spans 207-226 (ASVIADRIGITRSVIVNALR).

This sequence belongs to the CodY family.

Its subcellular location is the cytoplasm. In terms of biological role, DNA-binding global transcriptional regulator which is involved in the adaptive response to starvation and acts by directly or indirectly controlling the expression of numerous genes in response to nutrient availability. During rapid exponential growth, CodY is highly active and represses genes whose products allow adaptation to nutrient depletion. The protein is Global transcriptional regulator CodY of Streptococcus thermophilus (strain CNRZ 1066).